A 139-amino-acid polypeptide reads, in one-letter code: Nucleoside diphosphate kinase (139 aa).

Lys11, Phe59, Arg87, Thr93, Arg104, and Asn114 together coordinate ATP. The active-site Pros-phosphohistidine intermediate is the His117.

It belongs to the NDK family. As to quaternary structure, homotetramer. Mg(2+) is required as a cofactor.

It localises to the cytoplasm. The enzyme catalyses a 2'-deoxyribonucleoside 5'-diphosphate + ATP = a 2'-deoxyribonucleoside 5'-triphosphate + ADP. The catalysed reaction is a ribonucleoside 5'-diphosphate + ATP = a ribonucleoside 5'-triphosphate + ADP. Major role in the synthesis of nucleoside triphosphates other than ATP. The ATP gamma phosphate is transferred to the NDP beta phosphate via a ping-pong mechanism, using a phosphorylated active-site intermediate. In Wolbachia sp. subsp. Drosophila simulans (strain wRi), this protein is Nucleoside diphosphate kinase.